The sequence spans 272 residues: Isoprenyl transferase (272 aa).

D32 is an active-site residue. D32 is a Mg(2+) binding site. Residues 33–36, W37, R45, H49, and 77–79 each bind substrate; these read GNGR and STE. Residue N80 is the Proton acceptor of the active site. Substrate-binding positions include W81, R83, R200, and 206 to 208; that span reads RIS. Position 219 (E219) interacts with Mg(2+).

Belongs to the UPP synthase family. As to quaternary structure, homodimer. Mg(2+) serves as cofactor.

Functionally, catalyzes the condensation of isopentenyl diphosphate (IPP) with allylic pyrophosphates generating different type of terpenoids. The sequence is that of Isoprenyl transferase from Prochlorococcus marinus subsp. pastoris (strain CCMP1986 / NIES-2087 / MED4).